Here is a 156-residue protein sequence, read N- to C-terminus: 6,7-dimethyl-8-ribityllumazine synthase (156 aa).

5-amino-6-(D-ribitylamino)uracil contacts are provided by residues Phe22, 57–59 (AYE), and 81–83 (TVI). A (2S)-2-hydroxy-3-oxobutyl phosphate-binding site is contributed by 86-87 (GT). His89 acts as the Proton donor in catalysis. Phe114 lines the 5-amino-6-(D-ribitylamino)uracil pocket. Arg128 serves as a coordination point for (2S)-2-hydroxy-3-oxobutyl phosphate.

The protein belongs to the DMRL synthase family. As to quaternary structure, forms an icosahedral capsid composed of 60 subunits, arranged as a dodecamer of pentamers.

It carries out the reaction (2S)-2-hydroxy-3-oxobutyl phosphate + 5-amino-6-(D-ribitylamino)uracil = 6,7-dimethyl-8-(1-D-ribityl)lumazine + phosphate + 2 H2O + H(+). Its pathway is cofactor biosynthesis; riboflavin biosynthesis; riboflavin from 2-hydroxy-3-oxobutyl phosphate and 5-amino-6-(D-ribitylamino)uracil: step 1/2. Functionally, catalyzes the formation of 6,7-dimethyl-8-ribityllumazine by condensation of 5-amino-6-(D-ribitylamino)uracil with 3,4-dihydroxy-2-butanone 4-phosphate. This is the penultimate step in the biosynthesis of riboflavin. In Photorhabdus laumondii subsp. laumondii (strain DSM 15139 / CIP 105565 / TT01) (Photorhabdus luminescens subsp. laumondii), this protein is 6,7-dimethyl-8-ribityllumazine synthase.